Reading from the N-terminus, the 243-residue chain is Large ribosomal subunit protein uL2 (243 aa).

The segment covering 1-12 (MGRRIQGQRRGR) has biased composition (basic residues). Disordered regions lie at residues 1–38 (MGRR…SDDT) and 198–243 (VDHP…GSSE). Composition is skewed to basic and acidic residues over residues 24 to 34 (YKAELSHKQSE) and 221 to 231 (PPGRKVGDIAS).

The protein belongs to the universal ribosomal protein uL2 family. In terms of assembly, part of the 50S ribosomal subunit. Forms a bridge to the 30S subunit in the 70S ribosome.

In terms of biological role, one of the primary rRNA binding proteins. Required for association of the 30S and 50S subunits to form the 70S ribosome, for tRNA binding and peptide bond formation. It has been suggested to have peptidyltransferase activity; this is somewhat controversial. Makes several contacts with the 16S rRNA in the 70S ribosome. In Haloquadratum walsbyi (strain DSM 16790 / HBSQ001), this protein is Large ribosomal subunit protein uL2.